Reading from the N-terminus, the 54-residue chain is Califin-B (54 aa).

Cysteine 25 and cysteine 53 are oxidised to a cystine. Leucine amide is present on leucine 36.

Belongs to the molluscan ELH family. This protein consists of a large 36-residue subunit, bound by a single disulfide-bond to a small 18-residue subunit.

The protein localises to the secreted. Functionally, injected in sexually mature animals califin B excites LB and LC cells of the abdominal ganglion and cause egg-laying. This is Califin-B from Aplysia californica (California sea hare).